Consider the following 459-residue polypeptide: Phosphoglucosamine mutase (459 aa).

The active-site Phosphoserine intermediate is Ser-102. Mg(2+) is bound by residues Ser-102, Asp-243, Asp-245, and Asp-247. Position 102 is a phosphoserine (Ser-102).

This sequence belongs to the phosphohexose mutase family. Mg(2+) is required as a cofactor. Activated by phosphorylation.

It catalyses the reaction alpha-D-glucosamine 1-phosphate = D-glucosamine 6-phosphate. Functionally, catalyzes the conversion of glucosamine-6-phosphate to glucosamine-1-phosphate. This chain is Phosphoglucosamine mutase, found in Bartonella quintana (strain Toulouse) (Rochalimaea quintana).